The chain runs to 435 residues: 3-phosphoshikimate 1-carboxyvinyltransferase (435 aa).

Residues K21, S22, and R26 each coordinate 3-phosphoshikimate. A phosphoenolpyruvate-binding site is contributed by K21. Positions 100 and 128 each coordinate phosphoenolpyruvate. Residues S171, S172, Q173, S199, D313, and K340 each contribute to the 3-phosphoshikimate site. Residue Q173 coordinates phosphoenolpyruvate. The Proton acceptor role is filled by D313. Residues R344, R386, and K412 each coordinate phosphoenolpyruvate.

This sequence belongs to the EPSP synthase family. As to quaternary structure, monomer.

Its subcellular location is the cytoplasm. It carries out the reaction 3-phosphoshikimate + phosphoenolpyruvate = 5-O-(1-carboxyvinyl)-3-phosphoshikimate + phosphate. The protein operates within metabolic intermediate biosynthesis; chorismate biosynthesis; chorismate from D-erythrose 4-phosphate and phosphoenolpyruvate: step 6/7. Its function is as follows. Catalyzes the transfer of the enolpyruvyl moiety of phosphoenolpyruvate (PEP) to the 5-hydroxyl of shikimate-3-phosphate (S3P) to produce enolpyruvyl shikimate-3-phosphate and inorganic phosphate. The sequence is that of 3-phosphoshikimate 1-carboxyvinyltransferase from Clostridium novyi (strain NT).